Reading from the N-terminus, the 561-residue chain is MSSHGNSLFLRESGAGGGCLQGLQDSLQQRALRTRLRLQTMTREHVRRFLRRNAFILLTVSAVIIGVSLAFALRPYQLSYRQIKYFSFPGELLMRMLQMLVLPLIVSSLVTGMASLDNKATGRMGMRAAVYYMVTTVIAVFIGILMVTIIHPGKGSKEGLHREGRIETVPTADAFMDLVRNMFPPNLVEACFKQFKTQYSTRVVTRTIVRTDNGSELGASMSPTSSVENETSILENVTRALGTLQEVISFEETVPVPGSANGINALGLVVFSVAFGLVIGGMKHKGRVLRDFFDSLNEAIMRLVGIIIWYAPVGILFLIAGKILEMEDMAVLGGQLGMYTLTVIVGLFLHAGGVLPLIYFLVTHRNPFPFIGGMLQALITAMGTSSSSATLPITFRCLEEGLGVDRRITRFVLPVGATVNMDGTALYEALAAIFIAQVNNYELNLGQITTISITATAASVGAAGIPQAGLVTMVIVLTSVGLPTEDITLIIAVDWFLDRLRTMTNVLGDSIGAAVIEHLSQRELELQEAELTLPSLGKPYKSLMAQEKGASRGRGGNESVM.

Over 1–52 the chain is Cytoplasmic; the sequence is MSSHGNSLFLRESGAGGGCLQGLQDSLQQRALRTRLRLQTMTREHVRRFLRR. Ser-2 is modified (phosphoserine). The next 3 membrane-spanning stretches (helical) occupy residues 53–73, 96–116, and 130–150; these read NAFI…AFAL, MLQM…MASL, and VYYM…VTII. N-linked (GlcNAc...) asparagine glycosylation is found at Asn-213, Asn-229, and Asn-236. Helical transmembrane passes span 259–282, 292–319, and 341–362; these read SANG…IGGM, FFDS…LFLI, and LTVI…YFLV. Residues 368–398 constitute an intramembrane region (discontinuously helical); that stretch reads FPFIGGMLQALITAMGTSSSSATLPITFRCL. Residue 385–387 participates in L-aspartate binding; it reads SSS. The helical transmembrane segment at 408-434 threads the bilayer; it reads ITRFVLPVGATVNMDGTALYEALAAIF. Na(+)-binding residues include Gly-416, Thr-418, and Asn-420. Residues Thr-424, 465 to 469, Asp-498, and Asn-505 each bind L-aspartate; that span reads IPQAG. An intramembrane region (discontinuously helical) is located at residues 448 to 481; the sequence is ITTISITATAASVGAAGIPQAGLVTMVIVLTSVG. Residues 495–516 form a helical membrane-spanning segment; it reads WFLDRLRTMTNVLGDSIGAAVI. 2 residues coordinate Na(+): Asn-505 and Asp-509.

Belongs to the dicarboxylate/amino acid:cation symporter (DAACS) (TC 2.A.23) family. SLC1A6 subfamily. As to quaternary structure, homotrimer. In terms of tissue distribution, brain specific.

It localises to the cell membrane. It carries out the reaction K(+)(in) + L-glutamate(out) + 3 Na(+)(out) + H(+)(out) = K(+)(out) + L-glutamate(in) + 3 Na(+)(in) + H(+)(in). It catalyses the reaction K(+)(in) + L-aspartate(out) + 3 Na(+)(out) + H(+)(out) = K(+)(out) + L-aspartate(in) + 3 Na(+)(in) + H(+)(in). The catalysed reaction is D-aspartate(out) + K(+)(in) + 3 Na(+)(out) + H(+)(out) = D-aspartate(in) + K(+)(out) + 3 Na(+)(in) + H(+)(in). Functionally, sodium-dependent, high-affinity amino acid transporter that mediates the uptake of L-glutamate and also L-aspartate and D-aspartate. Functions as a symporter that transports one amino acid molecule together with two or three Na(+) ions and one proton, in parallel with the counter-transport of one K(+) ion. Mediates Cl(-) flux that is not coupled to amino acid transport; this avoids the accumulation of negative charges due to aspartate and Na(+) symport. Plays a redundant role in the rapid removal of released glutamate from the synaptic cleft, which is essential for terminating the postsynaptic action of glutamate. This chain is Excitatory amino acid transporter 4 (Slc1a6), found in Mus musculus (Mouse).